We begin with the raw amino-acid sequence, 501 residues long: Alveolysin (501 aa).

The signal sequence occupies residues 1–32 (MKKKSNHLKGRKVLVSLLVSLQVFAFASISSA). The next 4 beta stranded transmembrane spans lie at 191-204 (QNQI…NAKV), 211-220 (IDFNAVANGE), 289-298 (SNDVQTAFKL), and 306-318 (QASG…YENS). The Conserved undecapeptide motif lies at 460–470 (ECTGLAWEWWR). The Cholesterol binding signature appears at 492 to 493 (TL).

It belongs to the cholesterol-dependent cytolysin family. In terms of assembly, homooligomeric pore complex of 35 to 50 subunits; when inserted in the host membrane.

The protein resides in the secreted. It localises to the host cell membrane. With respect to regulation, inhibited by cholesterol and thiol reagents. A cholesterol-dependent toxin that causes cytolysis by forming pores in cholesterol containing host membranes. After binding to target membranes, the protein undergoes a major conformation change, leading to its insertion in the host membrane and formation of an oligomeric pore complex. Cholesterol is required for binding to host cell membranes, membrane insertion and pore formation; cholesterol binding is mediated by a Thr-Leu pair in the C-terminus. Can be reversibly inactivated by oxidation. The protein is Alveolysin (alv) of Paenibacillus alvei (Bacillus alvei).